Consider the following 150-residue polypeptide: Ribonuclease H (150 aa).

The region spanning 1 to 141 is the RNase H type-1 domain; sequence MRPVIIHTDG…ADQLARDGLT (141 aa). Mg(2+) is bound by residues Asp9, Glu47, Asp69, and Asp133.

Belongs to the RNase H family. Monomer. The cofactor is Mg(2+).

Its subcellular location is the cytoplasm. It catalyses the reaction Endonucleolytic cleavage to 5'-phosphomonoester.. In terms of biological role, endonuclease that specifically degrades the RNA of RNA-DNA hybrids. In Rhodopseudomonas palustris (strain BisB5), this protein is Ribonuclease H.